The sequence spans 409 residues: Probable tRNA N6-adenosine threonylcarbamoyltransferase, mitochondrial (409 aa).

The N-terminal 31 residues, 1-31 (MHALRNFAGNGIANVFGCGIRRRLSYVLGIE), are a transit peptide targeting the mitochondrion. A divalent metal cation is bound by residues His135 and His139. Substrate-binding positions include 159–163 (LASGG), Asp192, Gly212, Glu216, 322–323 (NN), and Ser350. Asp351 contacts a divalent metal cation.

This sequence belongs to the KAE1 / TsaD family. In terms of assembly, homodimer. Requires a divalent metal cation as cofactor.

It localises to the mitochondrion. The enzyme catalyses L-threonylcarbamoyladenylate + adenosine(37) in tRNA = N(6)-L-threonylcarbamoyladenosine(37) in tRNA + AMP + H(+). Required for the formation of a threonylcarbamoyl group on adenosine at position 37 (t(6)A37) in mitochondrial tRNAs that read codons beginning with adenine. Probably involved in the transfer of the threonylcarbamoyl moiety of threonylcarbamoyl-AMP (TC-AMP) to the N6 group of A37. Involved in mitochondrial genome maintenance. The chain is Probable tRNA N6-adenosine threonylcarbamoyltransferase, mitochondrial from Drosophila melanogaster (Fruit fly).